Consider the following 211-residue polypeptide: Small ribosomal subunit protein uS5 (211 aa).

One can recognise an S5 DRBM domain in the interval 58–121 (FEERIVKLKR…KKAHNSIHTV (64 aa)).

It belongs to the universal ribosomal protein uS5 family. Part of the 30S ribosomal subunit. Contacts proteins S4 and S8.

Its function is as follows. With S4 and S12 plays an important role in translational accuracy. Functionally, located at the back of the 30S subunit body where it stabilizes the conformation of the head with respect to the body. This is Small ribosomal subunit protein uS5 from Mycoplasma genitalium (strain ATCC 33530 / DSM 19775 / NCTC 10195 / G37) (Mycoplasmoides genitalium).